Consider the following 218-residue polypeptide: Large ribosomal subunit protein uL4 (218 aa).

Residues 46 to 100 are disordered; it reads ARQGTHSTKTRAEVRGGGRKPFRQKGTGRARQGSIRAPHFTGGGISHGPKPRDYA. Basic residues predominate over residues 62–73; sequence GGRKPFRQKGTG.

Belongs to the universal ribosomal protein uL4 family. Part of the 50S ribosomal subunit.

In terms of biological role, one of the primary rRNA binding proteins, this protein initially binds near the 5'-end of the 23S rRNA. It is important during the early stages of 50S assembly. It makes multiple contacts with different domains of the 23S rRNA in the assembled 50S subunit and ribosome. Its function is as follows. Forms part of the polypeptide exit tunnel. This Corynebacterium efficiens (strain DSM 44549 / YS-314 / AJ 12310 / JCM 11189 / NBRC 100395) protein is Large ribosomal subunit protein uL4.